The primary structure comprises 551 residues: Solute carrier family 22 member 3 (551 aa).

Residues 21-41 (VFLLLCLTGVTFAFLFVGVVF) form a helical membrane-spanning segment. Residues N72, N99, and N114 are each glycosylated (N-linked (GlcNAc...) asparagine). Residues 177–197 (LIIYLISCFGVGITGVVVAFA) form a helical membrane-spanning segment. N-linked (GlcNAc...) asparagine glycosylation is present at N199. 2 helical membrane passes run 236 to 256 (IVGI…PGIA) and 264 to 284 (GIQL…WVVP). The short motif at 284–288 (PESPR) is the Proline-rich sequence element. Residue N317 is glycosylated (N-linked (GlcNAc...) asparagine). The next 3 membrane-spanning stretches (helical) occupy residues 376 to 396 (IDFF…LLTI), 464 to 484 (GVSL…FLLF), and 493 to 513 (LPLI…MLLP).

The protein belongs to the major facilitator (TC 2.A.1) superfamily. Organic cation transporter (TC 2.A.1.19) family. Highly expressed in placenta. Highly expressed in kidney cortex. In kidney, expressed specifically in the proximal and distal convoluted tubules and within Bowman capsule. Expressed in brain, particularly in dopaminergic neurons of the substantia nigra compacta, non-aminergic neurons of the ventral tegmental area, substantia nigra reticulata, locus coeruleus, hippocampus and cortex. In brain, also detected in astrocytes in the substantia nigra reticulata, several hypothalamic nuclei and nigrostriatal region. Expressed in neurons and glial cells of amygdala.

It is found in the cell membrane. It localises to the apical cell membrane. Its subcellular location is the basolateral cell membrane. The protein localises to the mitochondrion membrane. The protein resides in the endomembrane system. It is found in the nucleus membrane. It localises to the nucleus outer membrane. It carries out the reaction (R)-noradrenaline(out) = (R)-noradrenaline(in). The enzyme catalyses (R)-adrenaline(out) = (R)-adrenaline(in). It catalyses the reaction serotonin(out) = serotonin(in). The catalysed reaction is dopamine(out) = dopamine(in). It carries out the reaction histamine(out) = histamine(in). The enzyme catalyses tyramine(in) = tyramine(out). It catalyses the reaction guanidine(out) = guanidine(in). The catalysed reaction is agmatine(out) = agmatine(in). It carries out the reaction spermidine(in) = spermidine(out). The enzyme catalyses L-histidyl-L-proline diketopiperazine(in) = L-histidyl-L-proline diketopiperazine(out). It catalyses the reaction (R)-salsolinol(in) = (R)-salsolinol(out). Functionally, electrogenic voltage-dependent transporter that mediates the transport of a variety of organic cations such as endogenous bioactive amines, cationic drugs and xenobiotics. Cation cellular uptake or release is driven by the electrochemical potential, i.e. membrane potential and concentration gradient. Functions as a Na(+)- and Cl(-)-independent, bidirectional uniporter. Implicated in monoamine neurotransmitters uptake such as dopamine, adrenaline/epinephrine, noradrenaline/norepinephrine, homovanillic acid, histamine, serotonin and tyramine, thereby supporting a role in homeostatic regulation of aminergic neurotransmission in the brain. Transports dopaminergic neuromodulators cyclo(his-pro) and salsolinol with low efficiency. May be involved in the uptake and disposition of cationic compounds by renal clearance from the blood flow. May contribute to regulate the transport of cationic compounds in testis across the blood-testis-barrier. Mediates the transport of polyamine spermidine and putrescine. Mediates the bidirectional transport of polyamine agmatine. Also transports guanidine. May also mediate intracellular transport of organic cations, thereby playing a role in amine metabolism and intracellular signaling. The chain is Solute carrier family 22 member 3 from Mus musculus (Mouse).